A 471-amino-acid polypeptide reads, in one-letter code: Indole-3-acetate beta-glucosyltransferase (471 aa).

Residue His-15 is the Proton acceptor of the active site. His-15 contacts an anthocyanidin. Asp-107 serves as the catalytic Charge relay. 9 residues coordinate UDP-alpha-D-glucose: Thr-129, Gln-344, His-359, Trp-362, Asn-363, Ser-364, Glu-367, Asp-383, and Gln-384.

This sequence belongs to the UDP-glycosyltransferase family.

The catalysed reaction is (indol-3-yl)acetate + UDP-alpha-D-glucose = 1-O-(indol-3-ylacetyl)-beta-D-glucose + UDP. Its pathway is plant hormone metabolism; auxin conjugation. In Zea mays (Maize), this protein is Indole-3-acetate beta-glucosyltransferase (IAGLU).